The sequence spans 197 residues: Probable nicotinate-nucleotide adenylyltransferase (197 aa).

It belongs to the NadD family.

It catalyses the reaction nicotinate beta-D-ribonucleotide + ATP + H(+) = deamido-NAD(+) + diphosphate. The protein operates within cofactor biosynthesis; NAD(+) biosynthesis; deamido-NAD(+) from nicotinate D-ribonucleotide: step 1/1. Catalyzes the reversible adenylation of nicotinate mononucleotide (NaMN) to nicotinic acid adenine dinucleotide (NaAD). This chain is Probable nicotinate-nucleotide adenylyltransferase, found in Bordetella avium (strain 197N).